We begin with the raw amino-acid sequence, 793 residues long: Short transient receptor potential channel 1 (793 aa).

Residues 1 to 30 form a disordered region; the sequence is MMAALYPSTDLSGASSSSLPSSPSSSSPNE. The Cytoplasmic portion of the chain corresponds to 1-345; that stretch reads MMAALYPSTD…FGQMSGYRRK (345 aa). Residues 15 to 28 are compositionally biased toward low complexity; sequence SSSSLPSSPSSSSP. ANK repeat units follow at residues 46–75, 83–109, 111–156, and 158–180; these read LNEKLFLLACDKGDYYMVKKILEENSSGDL, LGRNAVTITIENENLDILQLLLDYGCQ, ADAL…EYST, and MDVAPVILAAHRNNYEILTMLLK. Zn(2+) is bound by residues H189, C193, C195, and C198. Residues 346-379 constitute an intramembrane region (discontinuously helical); the sequence is PTCKKIMTVLTVGIFWPVLSLCYLIAPKSQFGRI. The Cytoplasmic portion of the chain corresponds to 380-386; it reads IHTPFMK. A helical membrane pass occupies residues 387 to 404; it reads FIIHGASYFTFLLLLNLY. Over 405 to 422 the chain is Extracellular; that stretch reads SLVYNEDKKNTMGPALER. The chain crosses the membrane as a helical span at residues 423–439; the sequence is IDYLLILWIIGMIWSDI. At 440–455 the chain is on the cytoplasmic side; sequence KRLWYEGLEDFLEESR. The chain crosses the membrane as a helical span at residues 456-475; sequence NQLSFVMNSLYLATFALKVV. Residues 476-496 lie on the Extracellular side of the membrane; it reads AHNKFHDFADRKDWDAFHPTL. The chain crosses the membrane as a helical span at residues 497–517; sequence VAEGLFAFANVLSYLRLFFMY. Residues 518-536 lie on the Cytoplasmic side of the membrane; that stretch reads TTSSILGPLQISMGQMLQD. The chain crosses the membrane as a helical span at residues 537-558; that stretch reads FGKFLGMFLLVLFSFTIGLTQL. The Extracellular portion of the chain corresponds to 559 to 623; it reads YDKGYTSKEQ…GEELQSFVGA (65 aa). Cysteines 571 and 576 form a disulfide. A helical transmembrane segment spans residues 624–644; sequence VIVGTYNVVVVIVLTKLLVAM. Residues 645–793 are Cytoplasmic-facing; the sequence is LHKSFQLIAN…SKYAMFYPRN (149 aa).

It belongs to the transient receptor (TC 1.A.4) family. STrpC subfamily. TRPC1 sub-subfamily. In terms of assembly, heterotetramer with TRPC4 and/or TRPC5. Forms a heteromeric ion channel with TRPC4, with a 1:3 TRPC1:TRPC4 stoichiometry. Unlike other TRP channel proteins, does not form a homomeric channel. Interacts with TRPC4AP. Interacts with ITPR3. Interacts with MX1 and RNF24. Interacts with FKBP4. Interacts with PLSCR1. Interacts with PKD2L2. Forms a heterotetramer with PKD2 with a 2:2 stoichiometry; has distinct channel properties separate from PKD2 or TRPC1 homomers alone. As to quaternary structure, interacts with isoform 2 of TRPC3. Post-translationally, activation of PRKCA induces phosphorylation of TRPC1 and subsequent Ca2+ entry into cells. In terms of tissue distribution, seems to be ubiquitous.

Its subcellular location is the cell membrane. The enzyme catalyses Ca(2+)(in) = Ca(2+)(out). It catalyses the reaction Na(+)(in) = Na(+)(out). It carries out the reaction Li(+)(in) = Li(+)(out). The catalysed reaction is Cs(+)(in) = Cs(+)(out). May be operated by a phosphatidylinositol second messenger system activated by receptor tyrosine kinases or G-protein coupled receptors. Also activated by intracellular calcium store depletion. Inhibited by xanthine-based inhibitor Pico145. Its function is as follows. Forms a receptor-activated non-selective calcium permeant cation channel. Forms a heteromeric ion channel with TRPC4 or TRPC5 that has reduced calcium permeability compared to the homomeric TRPC4 or TRPC5 channel. Also permeable to monovalent ions including sodium, lithium and cesium ions. Forms a receptor-activated non-selective calcium permeant cation channel. Also activated by intracellular calcium store depletion. The protein is Short transient receptor potential channel 1 (TRPC1) of Homo sapiens (Human).